We begin with the raw amino-acid sequence, 132 residues long: Snaclec bothroinsularin subunit alpha (132 aa).

Disulfide bonds link Cys2-Cys13, Cys30-Cys127, and Cys102-Cys119. The C-type lectin domain maps to 9-128 (YGQYCYKFFQ…CGQQNPFVCK (120 aa)).

Belongs to the snaclec family. In terms of assembly, heterodimer of subunits alpha and beta; disulfide-linked. Expressed by the venom gland.

It localises to the secreted. Its function is as follows. Thrombin and prothrombin (F2) inhibitor. The IC(50) of thrombin-induced platelet aggregation and fibrinocoagulation is 62 and 35 nM, respectively. Its inhibitory activity is at least 10-fold lower than that observed for other thrombin inhibitors. The protein is Snaclec bothroinsularin subunit alpha of Bothrops insularis (Golden lancehead).